Consider the following 347-residue polypeptide: Haptoglobin (347 aa).

The N-terminal stretch at Met-1–Ala-18 is a signal peptide. A Sushi domain is found at Asp-31–Ala-88. 2 disulfide bridges follow: Cys-52-Cys-86 and Cys-90-Cys-207. In terms of domain architecture, Peptidase S1 spans Ile-103–Ala-345. N-linked (GlcNAc...) asparagine glycans are attached at residues Asn-148, Asn-152, Asn-182, Asn-230, and Asn-256. Cystine bridges form between Cys-250/Cys-281 and Cys-292/Cys-322. The segment at Val-259–Ile-264 is interaction with CD163.

Belongs to the peptidase S1 family. Tetramer of two alpha and two beta chains; disulfide-linked. The hemoglobin/haptoglobin complex is composed of a haptoglobin dimer bound to two hemoglobin alpha-beta dimers. Interacts with CD163. Interacts with ERGIC3. In terms of tissue distribution, expressed by the liver and secreted in plasma.

Its subcellular location is the secreted. Functionally, as a result of hemolysis, hemoglobin is found to accumulate in the kidney and is secreted in the urine. Haptoglobin captures, and combines with free plasma hemoglobin to allow hepatic recycling of heme iron and to prevent kidney damage. Haptoglobin also acts as an antioxidant, has antibacterial activity and plays a role in modulating many aspects of the acute phase response. Hemoglobin/haptoglobin complexes are rapidly cleared by the macrophage CD163 scavenger receptor expressed on the surface of liver Kupfer cells through an endocytic lysosomal degradation pathway. The sequence is that of Haptoglobin (HP) from Oryctolagus cuniculus (Rabbit).